The primary structure comprises 161 residues: MSVSVWPPLLLLLLLLLLWAVPTFQDKNTRVSAYKGIGEMCRNNSECQSDCCVTNSLNPQKFCTSQTVFLECVPWRKPNGFLCEENTECHSNCCIRTSSNPDRFCSSKTIFMQCISWRKPEGAICQHHLECWDLCCLPLSENSPSSHCTKRTGLLALCLPV.

The signal sequence occupies residues 1-25 (MSVSVWPPLLLLLLLLLLWAVPTFQ).

The protein is Leucine-rich colipase-like protein 1 (Lrcol1) of Mus musculus (Mouse).